Here is a 146-residue protein sequence, read N- to C-terminus: Hut operon positive regulatory protein (146 aa).

The protein belongs to the HutP family. As to quaternary structure, homohexamer.

Its function is as follows. Antiterminator that binds to cis-acting regulatory sequences on the mRNA in the presence of histidine, thereby suppressing transcription termination and activating the hut operon for histidine utilization. The polypeptide is Hut operon positive regulatory protein (Bacillus cereus (strain AH820)).